A 243-amino-acid chain; its full sequence is uncharacterized protein (243 aa).

An N-terminal signal peptide occupies residues 1–16; sequence MKHFIILFLLLFVTAG. Cys-17 is lipidated: N-palmitoyl cysteine. Cys-17 carries S-diacylglycerol cysteine lipidation.

Its subcellular location is the cell membrane. This is an uncharacterized protein from Bacillus subtilis (strain 168).